Consider the following 404-residue polypeptide: MTNELGDIGFGYRPRAAYATDPALSRGRLFDEVESPTRTPFQRDRDRIIHSTAFRRLKHKTQVFIAHEGDHYRTRLTHSIEVAQIARAVARALRGDEDLAEAVALVHDFGHTPFGHTGEDALNDKMAAWGGFDHNAQSLRIVTRLEARYAEFDGLNLTWETLEGLVKHNGPLTDASGKGLKGPVPQAIRDYSQMQDLELDRFAGIEAQCAAIADDIAYNTHDIDDGLRAGLLTLDMLKTVSLPGKILEGVRQRYPRLDDVRTGHELMRRQITAMVEDVIVSATANLERVGPRSADAVRAAGETMVTFSAEMAAAEKELKAFLYKHLYRHEEVMRVRAGAEQIVRDLFDVYFADPRAMPDGWREGLDRAEDRIKARSVADFLAGMTDTYALKEHRRLFDRTPDLS.

Residues 75-219 (RLTHSIEVAQ…AAIADDIAYN (145 aa)) form the HD domain.

Belongs to the dGTPase family. Type 2 subfamily.

The sequence is that of Deoxyguanosinetriphosphate triphosphohydrolase-like protein 1 from Mesorhizobium japonicum (strain LMG 29417 / CECT 9101 / MAFF 303099) (Mesorhizobium loti (strain MAFF 303099)).